The sequence spans 195 residues: Cytochrome c oxidase assembly protein CtaG (195 aa).

Topologically, residues 1-7 are cytoplasmic; sequence MSGGKPR. The chain crosses the membrane as a helical; Signal-anchor for type II membrane protein span at residues 8-30; sequence SNTRTVAMLAGVVVLMGALSWAA. Residues 31–195 are Periplasmic-facing; the sequence is VPFYSWFCKV…LDAKTEPTVN (165 aa).

This sequence belongs to the COX11/CtaG family.

The protein localises to the cell inner membrane. In terms of biological role, exerts its effect at some terminal stage of cytochrome c oxidase synthesis, probably by being involved in the insertion of the copper B into subunit I. The protein is Cytochrome c oxidase assembly protein CtaG of Paracoccus denitrificans (strain Pd 1222).